A 223-amino-acid chain; its full sequence is Lipoprotein-releasing system ATP-binding protein LolD (223 aa).

One can recognise an ABC transporter domain in the interval 1-223 (MAKVFRSGST…DEVEPQSLPA (223 aa)). An ATP-binding site is contributed by 32–39 (GDSGSGKS).

This sequence belongs to the ABC transporter superfamily. Lipoprotein translocase (TC 3.A.1.125) family. In terms of assembly, the complex is composed of two ATP-binding proteins (LolD) and two transmembrane proteins (LolC and LolE).

The protein localises to the cell inner membrane. In terms of biological role, part of the ABC transporter complex LolCDE involved in the translocation of mature outer membrane-directed lipoproteins, from the inner membrane to the periplasmic chaperone, LolA. Responsible for the formation of the LolA-lipoprotein complex in an ATP-dependent manner. The sequence is that of Lipoprotein-releasing system ATP-binding protein LolD from Koribacter versatilis (strain Ellin345).